The primary structure comprises 228 residues: Protein LIAT1 (228 aa).

Positions 1–108 (MAGRGGTGAA…RAEPRDKEEN (108 aa)) are disordered. Residues 12 to 24 (YGEEGEEEEEEEA) are compositionally biased toward acidic residues. The segment at 49-71 (KRKVKKKKKKKKTKGSGKGDADK) is lysine-rich domain. The span at 50 to 63 (RKVKKKKKKKKTKG) shows a compositional bias: basic residues. The segment covering 90–108 (LNPHKDHGLRAEPRDKEEN) has biased composition (basic and acidic residues). The segment at 113-165 (PYSYSINHPCFAEIEDTLSSQINESLRWDGILTDPEAEKERIRIYKLNRRKRY) is interaction with ATE1. Repeat unit 1 spans residues 169–178 (ALKCFHSDPC).

In terms of assembly, self-associates (via Lys-rich domain); targets LIAT1 to the nucleolus. Interacts with ATE1; it is not a substrate of ATE1, the interaction takes place in the cytoplasm and seems to increase ATE1 arginyltransferase activity. Interacts with JMJD6 and MRPS14. Post-translationally, post-translationally modified by JMJD6 lysyl-hydroxylase activity at its Lys-rich domain, which inhibits its self-association and nucleolar localization. Highly expressed in spleen, thymus, liver and brown adipose tissue. Moderately expressed in liver, testis and lung.

The protein localises to the nucleus. It localises to the nucleolus. Its subcellular location is the cytoplasm. Participates in nucleolar liquid-liquid phase separation (LLPS) through its N-terminal intrinsically disordered region (IDR). May be involved in ATE1-mediated N-terminal arginylation. The sequence is that of Protein LIAT1 from Mus musculus (Mouse).